Here is a 702-residue protein sequence, read N- to C-terminus: Dissimilatory sulfite reductase MccA (702 aa).

Positions 1 to 39 (MLSGWSVLKGGNMKYWDKALLSLFMCVSTLSIAATHAVA) are cleaved as a signal peptide. Residues Cys155, Cys158, His159, and His171 each contribute to the heme c site. Substrate contacts are provided by Lys220 and Tyr297. 10 residues coordinate heme c: Cys314, Cys317, His318, Cys351, Cys354, His355, His360, Cys372, Cys375, and His376. Arg378 contributes to the substrate binding site. Cys411 provides a ligand contact to Cu(+). The heme c site is built by His423, Cys430, Cys433, His434, His437, Cys474, Cys477, His478, His491, Cys496, Cys499, and His500. Cys507 is a binding site for Cu(+). Heme c is bound by residues His528, Cys574, Cys590, His591, and His675.

This sequence belongs to the multiheme cytochrome c family. As to quaternary structure, homotrimer. It depends on Cu(+) as a cofactor. Requires heme c as cofactor.

It is found in the periplasm. It carries out the reaction [protein]-disulfide + hydrogen sulfide + 2 A + 3 H2O = [protein]-dithiol + sulfite + 2 AH2 + H(+). Its pathway is sulfur metabolism; sulfite reduction. Functionally, respiratory sulfite reductase that catalyzes the reduction of sulfite to sulfide in a single step, consuming six electrons in the process. Required for sulfite respiration under anaerobic growth conditions. Has only marginal activity with nitrite. In Wolinella succinogenes (strain ATCC 29543 / DSM 1740 / CCUG 13145 / JCM 31913 / LMG 7466 / NCTC 11488 / FDC 602W) (Vibrio succinogenes), this protein is Dissimilatory sulfite reductase MccA.